The chain runs to 528 residues: Ivanolysin (528 aa).

The first 23 residues, 1 to 23 (MKKIMLLLMTLLLVSLPLAQEAQ), serve as a signal peptide directing secretion. The next 4 membrane-spanning stretches (beta stranded) occupy residues 213–226 (ESQL…AFKA), 233–242 (VNFGAISEGK), 311–320 (STRVKAAFDT), and 328–340 (KGDT…IQNA). A Conserved undecapeptide motif is present at residues 482–492 (ECTGLAWEWWR). The Cholesterol binding motif lies at 514-515 (TL).

This sequence belongs to the cholesterol-dependent cytolysin family. As to quaternary structure, homooligomeric pore complex of 35 to 50 subunits; when inserted in the host membrane.

Its subcellular location is the secreted. The protein resides in the host membrane. Its function is as follows. A cholesterol-dependent toxin that causes cytolysis by forming pores in cholesterol containing host membranes. After binding to target membranes, the protein undergoes a major conformation change, leading to its insertion in the host membrane and formation of an oligomeric pore complex. Cholesterol is required for binding to host membranes, membrane insertion and pore formation; cholesterol binding is mediated by a Thr-Leu pair in the C-terminus. Can be reversibly inactivated by oxidation. The polypeptide is Ivanolysin (ilo) (Listeria ivanovii).